We begin with the raw amino-acid sequence, 160 residues long: Glyoxalase domain-containing protein 5 (160 aa).

The VOC domain maps to 37-157; it reads RLDHIVMTVK…DRNLIEVSNY (121 aa).

Belongs to the glyoxalase I family.

This Homo sapiens (Human) protein is Glyoxalase domain-containing protein 5 (GLOD5).